A 340-amino-acid polypeptide reads, in one-letter code: DNA-directed RNA polymerase subunit alpha (340 aa).

The alpha N-terminal domain (alpha-NTD) stretch occupies residues 1-233 (MYRNWRDLIS…EQLSIFINFD (233 aa)). Residues 251–340 (VNENLYRSVD…RIRGERKDEE (90 aa)) form an alpha C-terminal domain (alpha-CTD) region.

The protein belongs to the RNA polymerase alpha chain family. As to quaternary structure, homodimer. The RNAP catalytic core consists of 2 alpha, 1 beta, 1 beta' and 1 omega subunit. When a sigma factor is associated with the core the holoenzyme is formed, which can initiate transcription.

The enzyme catalyses RNA(n) + a ribonucleoside 5'-triphosphate = RNA(n+1) + diphosphate. DNA-dependent RNA polymerase catalyzes the transcription of DNA into RNA using the four ribonucleoside triphosphates as substrates. This is DNA-directed RNA polymerase subunit alpha from Geobacter metallireducens (strain ATCC 53774 / DSM 7210 / GS-15).